The chain runs to 225 residues: Cobalt transport protein CbiM (225 aa).

The next 6 helical transmembrane spans lie at 7–27, 43–63, 76–96, 108–128, 143–163, and 175–195; these read VLPL…VAIA, PFVG…VPVP, LAAV…ALLI, TLGA…YFAF, FLAG…ALAL, and FTGV…LEGV.

Belongs to the CbiM family. As to quaternary structure, forms an energy-coupling factor (ECF) transporter complex composed of an ATP-binding protein (A component, CbiO), a transmembrane protein (T component, CbiQ) and 2 possible substrate-capture proteins (S components, CbiM and CbiN) of unknown stoichimetry.

The protein localises to the cell inner membrane. It participates in cofactor biosynthesis; adenosylcobalamin biosynthesis. Functionally, part of the energy-coupling factor (ECF) transporter complex CbiMNOQ involved in cobalt import. The chain is Cobalt transport protein CbiM from Sorangium cellulosum (strain So ce56) (Polyangium cellulosum (strain So ce56)).